Consider the following 215-residue polypeptide: MTKLTARQQQVFDLIRRAIERSGFPPTRAEIAAELGFSSPNAAEEHLRALARKGVIELAAGASRGIRLLGIDDAPHQFTLPHAGLMQLSLPLVGRVAAGSPILAQEHISQHYACDPALFTSKPDYLLKVRGLSMRDAGILDGDLLAVQKRTEAKDGQIIVARLGDDVTVKRLMRRPGGLELIAENPDYENIFVKAGSADFALEGIAVGLIRSGEL.

Residues 28–48 (RAEIAAELGFSSPNAAEEHLR) constitute a DNA-binding region (H-T-H motif). Residues S133 and K170 each act as for autocatalytic cleavage activity in the active site.

The protein belongs to the peptidase S24 family. Homodimer.

It carries out the reaction Hydrolysis of Ala-|-Gly bond in repressor LexA.. In terms of biological role, represses a number of genes involved in the response to DNA damage (SOS response), including recA and lexA. In the presence of single-stranded DNA, RecA interacts with LexA causing an autocatalytic cleavage which disrupts the DNA-binding part of LexA, leading to derepression of the SOS regulon and eventually DNA repair. This Burkholderia cenocepacia (strain HI2424) protein is LexA repressor.